Consider the following 388-residue polypeptide: Na(+)/H(+) antiporter NhaA (388 aa).

A run of 11 helical transmembrane segments spans residues 14–34 (GGIILIIAAALAMLMANMGAT), 59–79 (MLLWINDALMAVFFLLIGLEV), 95–115 (AFPVIAAIGGMIVPALLYLAF), 125–145 (GWAIPAATDIAFALGVLALLG), 154–174 (IFLMALAIIDDLGAIIIIALF), 179–199 (LSIVSLGVAAFAIAVLALLNL), 219–239 (VLKSGVHATLAGVIVGFFIPL), 254–274 (VLHPWVAYLILPLFAFANAGV), 292–312 (IIAGLLIGKPLGISLFCWLAL), 328–348 (IMAVGILCGIGFTMSIFIASL), and 360–380 (WAKLGILIGSLLSAVVGYSWL).

The protein belongs to the NhaA Na(+)/H(+) (TC 2.A.33) antiporter family.

The protein localises to the cell inner membrane. It carries out the reaction Na(+)(in) + 2 H(+)(out) = Na(+)(out) + 2 H(+)(in). Na(+)/H(+) antiporter that extrudes sodium in exchange for external protons. The sequence is that of Na(+)/H(+) antiporter NhaA from Salmonella paratyphi A (strain ATCC 9150 / SARB42).